Consider the following 101-residue polypeptide: Urease subunit beta (101 aa).

The protein belongs to the urease beta subunit family. In terms of assembly, heterotrimer of UreA (gamma), UreB (beta) and UreC (alpha) subunits. Three heterotrimers associate to form the active enzyme.

The protein resides in the cytoplasm. The enzyme catalyses urea + 2 H2O + H(+) = hydrogencarbonate + 2 NH4(+). Its pathway is nitrogen metabolism; urea degradation; CO(2) and NH(3) from urea (urease route): step 1/1. The protein is Urease subunit beta of Azoarcus sp. (strain BH72).